Here is a 528-residue protein sequence, read N- to C-terminus: Benzoylformate decarboxylase (528 aa).

Residues Q117 and L118 each contribute to the Mg(2+) site. The tract at residues 377–460 is thiamine pyrophosphate binding; that stretch reads TSTVTAFWQR…IILKNGTYGA (84 aa). Positions 428, 455, and 457 each coordinate Ca(2+).

It belongs to the TPP enzyme family. Homotetramer. Ca(2+) is required as a cofactor. It depends on thiamine diphosphate as a cofactor. Mg(2+) serves as cofactor.

The enzyme catalyses phenylglyoxylate + H(+) = benzaldehyde + CO2. Its pathway is aromatic compound metabolism; (R)-mandelate degradation; benzoate from (R)-mandelate: step 3/4. This Pseudomonas aeruginosa (strain ATCC 15692 / DSM 22644 / CIP 104116 / JCM 14847 / LMG 12228 / 1C / PRS 101 / PAO1) protein is Benzoylformate decarboxylase (mdlC).